Here is a 761-residue protein sequence, read N- to C-terminus: Zinc finger protein 287 (761 aa).

An SCAN box domain is found at 49–131 (RQNFRNFPYP…TLVEDLTQIL (83 aa)). The disordered stretch occupies residues 134–154 (EAPQNSTLSQDTPEEDPRGKH). The 69-residue stretch at 170-238 (MTFKDVAVDI…IKEILEGPSP (69 aa)) folds into the KRAB domain. C2H2-type zinc fingers lie at residues 368 to 390 (YKCN…QSTH), 396 to 418 (YECE…QRMH), 424 to 446 (YECH…QRIH), 452 to 474 (YKCD…QRTH), 480 to 502 (YKCL…QRVH), 508 to 530 (YICN…QKIH), 536 to 558 (YKCN…QRIH), 564 to 586 (YKCN…QTTH), 592 to 614 (YICN…HRTH), 620 to 642 (YKCS…QRIH), 648 to 670 (FKCN…QRIH), 676 to 698 (YKCN…QRTH), 704 to 726 (YKCN…QRIH), and 732 to 754 (YACR…QRVH).

The protein belongs to the krueppel C2H2-type zinc-finger protein family.

The protein resides in the nucleus. Its function is as follows. May be involved in transcriptional regulation. This Homo sapiens (Human) protein is Zinc finger protein 287.